A 430-amino-acid polypeptide reads, in one-letter code: Microtubule-associated protein tau (430 aa).

Over residues 1–16 (MAEPRQEFDTAEDHAE) the composition is skewed to basic and acidic residues. The interval 1-245 (MAEPRQEFDT…PVPMPDLKNV (245 aa)) is disordered. An N-acetylalanine modification is found at alanine 2. Phosphotyrosine is present on tyrosine 18. Lysine 31 participates in a covalent cross-link: Glycyl lysine isopeptide (Lys-Gly) (interchain with G-Cter in ubiquitin). Phosphoserine occurs at positions 33 and 48. The segment covering 48 to 58 (SETSDAKSTPT) has biased composition (polar residues). 3 positions are modified to phosphothreonine: threonine 56, threonine 58, and threonine 98. The span at 117 to 133 (KGKEGTGSEDRKAKGAD) shows a compositional bias: basic and acidic residues. Residue threonine 142 is modified to Phosphothreonine. Arginine 144 is modified (omega-N-methylarginine). Position 152 is an N6,N6-dimethyllysine; alternate (lysine 152). At lysine 152 the chain carries N6-acetyllysine; alternate. Residues threonine 158, threonine 164, threonine 165, and threonine 170 each carry the phosphothreonine modification. Over residues 161 to 203 (PAKTTPSPKTPPGTGEPAKSGDRSGYSSPGSPGTPGSRSRTPS) the composition is skewed to low complexity. A phosphoserine mark is found at serine 180 and serine 184. A Phosphotyrosine modification is found at tyrosine 186. Phosphoserine occurs at positions 187, 188, and 191. Phosphothreonine is present on residues threonine 194 and threonine 201. Serine 203 bears the Phosphoserine mark. Phosphothreonine is present on threonine 206. The residue at position 214 (lysine 214) is an N6-acetyllysine. Phosphothreonine is present on threonine 220. Serine 224 and serine 226 each carry phosphoserine. 4 Tau/MAP repeats span residues 233-263 (QTAP…GGGK), 264-294 (VQII…GGGS), 295-325 (VQIV…GGGQ), and 326-357 (VEVK…GGGN). Lysine 243 participates in a covalent cross-link: Glycyl lysine isopeptide (Lys-Gly) (interchain with G-Cter in ubiquitin). Position 248 is an N6-acetyllysine; alternate (lysine 248). Residue lysine 248 is modified to N6-methyllysine; alternate. Lysine 248 is covalently cross-linked (Glycyl lysine isopeptide (Lys-Gly) (interchain with G-Cter in ubiquitin); alternate). Residue serine 251 is modified to Phosphoserine. Residue lysine 256 forms a Glycyl lysine isopeptide (Lys-Gly) (interchain with G-Cter in ubiquitin) linkage. N6-acetyllysine; alternate is present on lysine 270. Residue lysine 270 forms a Glycyl lysine isopeptide (Lys-Gly) (interchain with G-Cter in ubiquitin); alternate linkage. A phosphoserine mark is found at serine 274 and serine 278. Lysine 279 is modified (N6-acetyllysine). Cysteine 280 and cysteine 311 are disulfide-bonded. Residue serine 282 is modified to Phosphoserine. Lysine 287 is subject to N6-acetyllysine; alternate. A Glycyl lysine isopeptide (Lys-Gly) (interchain with G-Cter in ubiquitin); alternate cross-link involves residue lysine 287. Phosphoserine is present on serine 294. Position 300 is an N6,N6-dimethyllysine; alternate (lysine 300). Lysine 300, lysine 306, and lysine 310 each carry N6-acetyllysine; alternate. Glycyl lysine isopeptide (Lys-Gly) (interchain with G-Cter in ubiquitin); alternate cross-links involve residues lysine 300, lysine 306, and lysine 310. Serine 313 is subject to Phosphoserine. Lysine 320, lysine 332, and lysine 336 each carry N6-acetyllysine; alternate. Glycyl lysine isopeptide (Lys-Gly) (interchain with G-Cter in ubiquitin); alternate cross-links involve residues lysine 320, lysine 332, and lysine 336. Arginine 338 carries the omega-N-methylarginine modification. Serine 341 is subject to Phosphoserine. Residue lysine 342 forms a Glycyl lysine isopeptide (Lys-Gly) (interchain with G-Cter in ubiquitin) linkage. Serine 345 is modified (phosphoserine). At lysine 358 the chain carries N6-acetyllysine; alternate. Lysine 358 participates in a covalent cross-link: Glycyl lysine isopeptide (Lys-Gly) (interchain with G-Cter in ubiquitin); alternate. Residue lysine 364 forms a Glycyl lysine isopeptide (Lys-Gly) (interchain with G-Cter in ubiquitin) linkage. Lysine 374 carries the N6-acetyllysine; alternate modification. Lysine 374 participates in a covalent cross-link: Glycyl lysine isopeptide (Lys-Gly) (interchain with G-Cter in ubiquitin); alternate. Tyrosine 383 carries the post-translational modification Phosphotyrosine. 2 positions are modified to phosphoserine: serine 385 and serine 389. The interval 387-406 (VVSGDTSPRHLSNVSSTGSI) is disordered. Residues 390 to 406 (GDTSPRHLSNVSSTGSI) show a composition bias toward polar residues. Threonine 392 bears the Phosphothreonine mark. Phosphoserine is present on residues serine 393, serine 398, serine 405, and serine 411. Phosphothreonine is present on threonine 416.

In terms of assembly, interacts with MARK1, MARK2, MARK3 and MARK4. Interacts with SQSTM1 when polyubiquitinated. Interacts with PSMC2 through SQSTM1. Interacts with FKBP4. Binds to CSNK1D. Interacts with SGK1. Interacts with PIN1. Interacts with LRRK2. Interacts with LRP1, leading to endocytosis; this interaction is reduced in the presence of LRPAP1/RAP. Post-translationally, polyubiquitinated. Requires functional TRAF6 and may provoke SQSTM1-dependent degradation by the proteasome. Phosphorylation at various serine and threonine residues in S-P or T-P motifs by proline-directed protein kinases (PDPK1, CDK1, CDK5, GSK3, MAPK) (a few sites per protein in interphase, more in mitosis), and at serine residues in K-X-G-S motifs by MAP/microtubule affinity-regulating kinase (MARK1, MARK2, MARK3 or MARK4), causing detachment from microtubules, and their disassembly. Phosphorylation at Ser-345 by BRSK1 and BRSK2 in neurons affects ability to bind microtubules and plays a role in neuron polarization. Phosphorylated by PHK. Dephosphorylation at several serine and threonine residues by the serine/threonine phosphatase PPP5C. In terms of processing, hyperphosphorylated (in particular at Thr-170, Ser-191, Thr-194, Ser-251, and Ser-345) during hibernation. Phosphorylation is fully reversible after arousal. Highly phosphorylated tau contains a number of paired helical filaments (PHFs)-like epitopes. PHF-like phosphorylation is not associated with fibril formation. Distribution of PHF-like tau is more intense in the entorhinal cortex, hippocampus and isocortical areas. PHF-like phosphorylation-dephosphorylation during hibernation cycle is synchronized with regression-re-establishment of afferentation. It may reflect a protective mechanism in an unfavorable environment.

The protein localises to the cytoplasm. It is found in the cytosol. It localises to the cell membrane. Its subcellular location is the cytoskeleton. The protein resides in the cell projection. The protein localises to the axon. It is found in the dendrite. In terms of biological role, promotes microtubule assembly and stability, and might be involved in the establishment and maintenance of neuronal polarity. The C-terminus binds axonal microtubules while the N-terminus binds neural plasma membrane components, suggesting that tau functions as a linker protein between both. Axonal polarity is predetermined by tau localization (in the neuronal cell) in the domain of the cell body defined by the centrosome. The short isoforms allow plasticity of the cytoskeleton whereas the longer isoforms may preferentially play a role in its stabilization. The chain is Microtubule-associated protein tau (MAPT) from Spermophilus citellus (European ground squirrel).